A 1703-amino-acid chain; its full sequence is Gingipain R1 (1703 aa).

Positions 1-20 (MNKFVSIALCSSLLGGMAFA) are cleaved as a signal peptide. A propeptide spanning residues 21–224 (QQTELGRNPN…RMFMNYEPGR (204 aa)) is cleaved from the precursor. Ca(2+) contacts are provided by Asp302, Val324, Asp327, Tyr329, Glu331, Glu385, and His390. The active-site Proton donor is the His435. The Nucleophile role is filled by Cys468. Ca(2+)-binding residues include Phe473, Glu482, Asp516, Glu517, Glu520, and His526. The tract at residues 940-968 (WDAPNGTPNPNPNPNPNPNPGTTTLSESF) is disordered. Pro residues predominate over residues 946–958 (TPNPNPNPNPNPN).

It belongs to the peptidase C25 family.

It localises to the secreted. It carries out the reaction Hydrolysis of proteins and small molecule substrates, with a preference for Arg in P1.. In terms of biological role, thiol protease. Acts synergistically with RgpB to catalyze the maturation of fimbrial subunits, such as FimA. Its proteolytic activity is a major factor in both periodontal tissue destruction and in evasion of host defense mechanisms. The polypeptide is Gingipain R1 (Porphyromonas gingivalis (strain ATCC 33277 / DSM 20709 / CIP 103683 / JCM 12257 / NCTC 11834 / 2561)).